The following is an 88-amino-acid chain: Small ribosomal subunit protein bS20 (88 aa).

The protein belongs to the bacterial ribosomal protein bS20 family.

Its function is as follows. Binds directly to 16S ribosomal RNA. In Blochmanniella floridana, this protein is Small ribosomal subunit protein bS20.